Here is a 572-residue protein sequence, read N- to C-terminus: Proline--tRNA ligase (572 aa).

Belongs to the class-II aminoacyl-tRNA synthetase family. ProS type 1 subfamily. Homodimer.

The protein resides in the cytoplasm. The enzyme catalyses tRNA(Pro) + L-proline + ATP = L-prolyl-tRNA(Pro) + AMP + diphosphate. Its function is as follows. Catalyzes the attachment of proline to tRNA(Pro) in a two-step reaction: proline is first activated by ATP to form Pro-AMP and then transferred to the acceptor end of tRNA(Pro). As ProRS can inadvertently accommodate and process non-cognate amino acids such as alanine and cysteine, to avoid such errors it has two additional distinct editing activities against alanine. One activity is designated as 'pretransfer' editing and involves the tRNA(Pro)-independent hydrolysis of activated Ala-AMP. The other activity is designated 'posttransfer' editing and involves deacylation of mischarged Ala-tRNA(Pro). The misacylated Cys-tRNA(Pro) is not edited by ProRS. In Psychrobacter arcticus (strain DSM 17307 / VKM B-2377 / 273-4), this protein is Proline--tRNA ligase.